Here is a 2222-residue protein sequence, read N- to C-terminus: DNA polymerase epsilon catalytic subunit A (2222 aa).

The disordered stretch occupies residues 90 to 110 (ETLSSGSNGGGNSNDGERVTT). The Zn(2+) site is built by cysteine 2108, cysteine 2111, cysteine 2130, and cysteine 2133. Residues 2108-2133 (CEYCFFISDIDFCKAAPESIFSCVRC) form a CysA-type zinc finger. Cysteine 2164, cysteine 2167, cysteine 2179, and cysteine 2181 together coordinate [4Fe-4S] cluster. Residues 2164 to 2181 (CSRCHKVKRDYMSAHCPC) carry the CysB motif motif.

Belongs to the DNA polymerase type-B family. As to quaternary structure, DNA polymerase epsilon is a heterotetramer consisting of POL2, DPB2, DPB3 and DPB4. [4Fe-4S] cluster is required as a cofactor.

It is found in the nucleus. The catalysed reaction is DNA(n) + a 2'-deoxyribonucleoside 5'-triphosphate = DNA(n+1) + diphosphate. In terms of biological role, catalytic component of the DNA polymerase epsilon complex which participates in chromosomal DNA replication. Required during synthesis of the leading DNA strands at the replication fork, binds at/or near replication origins and moves along DNA with the replication fork. Has 3'-5' proofreading exonuclease activity that corrects errors arising during DNA replication. In Saccharomyces cerevisiae (strain ATCC 204508 / S288c) (Baker's yeast), this protein is DNA polymerase epsilon catalytic subunit A (POL2).